The sequence spans 648 residues: RAF proto-oncogene serine/threonine-protein kinase (648 aa).

Phosphoserine; by MAPK1 is present on Ser-29. Ser-43 bears the Phosphoserine mark. In terms of domain architecture, RBD spans 56–131 (NTIRVFLPNK…IGEELQVDFL (76 aa)). Residues 138-184 (THNFARKTFLKLAFCDICQKFLLNGFRCQTCGYKFHEHCSTKVPTMC) form a Phorbol-ester/DAG-type zinc finger. Positions 139, 152, 155, 165, 168, 173, 176, and 184 each coordinate Zn(2+). The tract at residues 217-335 (MRESVSRMPA…EKNKIRPRGQ (119 aa)) is disordered. Position 233 is a phosphoserine; by PKA (Ser-233). Polar residues predominate over residues 239-271 (TFNTSSPSSEGSLSQRQRSTSTPNVHMVSTTLP). Residues Ser-252 and Ser-259 each carry the phosphoserine modification. A Phosphothreonine; by autocatalysis modification is found at Thr-268. At Thr-269 the chain carries Phosphothreonine; by PKA. Residues 275–285 (RMIEDAIRSHS) show a composition bias toward basic and acidic residues. The segment covering 286-301 (ESASPSALSSSPNNLS) has biased composition (low complexity). Phosphoserine; by MAPK1 occurs at positions 289, 296, and 301. Residues 331 to 349 (RPRGQRDSSYYWEIEASEV) form an interaction with PEBP1/RKIP region. Residue Ser-338 is modified to Phosphoserine; by PAK1, PAK2, PAK3 and PAK5. Ser-339 carries the post-translational modification Phosphoserine; by PAK1, PAK2 and PAK3. Residues Tyr-340 and Tyr-341 each carry the phosphotyrosine; by SRC modification. The 261-residue stretch at 349–609 (VMLSTRIGSG…PQILSSIELL (261 aa)) folds into the Protein kinase domain. ATP is bound by residues 355-363 (IGSGSFGTV) and Lys-375. The Proton acceptor role is filled by Asp-468. The residue at position 471 (Ser-471) is a Phosphoserine. The residue at position 491 (Thr-491) is a Phosphothreonine. Ser-494 carries the phosphoserine modification. A phosphoserine; by PKC mark is found at Ser-497 and Ser-499. Arg-563 is modified (symmetric dimethylarginine; by PRMT5). Ser-621 bears the Phosphoserine mark. The residue at position 642 (Ser-642) is a Phosphoserine; by MAPK1.

Belongs to the protein kinase superfamily. TKL Ser/Thr protein kinase family. RAF subfamily. In terms of assembly, monomer. Homodimer. Heterodimerizes with BRAF and this heterodimer possesses a highly increased kinase activity compared to the respective homodimers or monomers. Heterodimerization is mitogen-regulated and enhanced by 14-3-3 proteins. MAPK1/ERK2 activation can induce a negative feedback that promotes the dissociation of the heterodimer. Forms a multiprotein complex with Ras (M-Ras/MRAS), SHOC2 and protein phosphatase 1 (PPP1CA, PPP1CB and PPP1CC). Interacts with LZTR1. Interacts with Ras proteins; the interaction is antagonized by RIN1. Weakly interacts with RIT1. Interacts with STK3/MST2; the interaction inhibits its pro-apoptotic activity. Interacts (when phosphorylated at Ser-259) with YWHAZ (unphosphorylated at 'Thr-232'). Interacts with MAP3K5/ASF1 (via N-terminus) and this interaction inhibits the proapoptotic function of MAP3K5/ASK1. Interacts with PAK1 (via kinase domain). The phosphorylated form interacts with PIN1. The Ser-338 and Ser-339 phosphorylated form (by PAK1) interacts with BCL2. Interacts with PEBP1/RKIP and this interaction is enhanced if RAF1 is phosphorylated on residues Ser-338, Ser-339, Tyr-340 and Tyr-341. Interacts with ADCY2, ADCY5, ADCY6, DGKH, RCAN1/DSCR1, PPP1R12A, PKB/AKT1, PPP2CA, PPP2R1B, SPRY2, SPRY4, CNKSR1/CNK1, KSR2 and PHB/prohibitin. Interacts with ROCK2. Interacts (via N-terminus) with RGS14 (via RBD domains); the interaction mediates the formation of a ternary complex with BRAF, a ternary complex inhibited by GNAI1. Probably forms a complex composed of chaperones HSP90 and HSP70, co-chaperones CDC37, PPP5C, TSC1 and client protein TSC2, CDK4, AKT, RAF1 and NR3C1; this complex does not contain co-chaperones STIP1/HOP and PTGES3/p23. Interacts with MAP2K1/MEK1 and MAP2K2/MEK2. In its active form, interacts with PRMT5. Interacts with FAM83B; displaces 14-3-3 proteins from RAF1 and activates RAF1. Interacts with PDE8A; the interaction promotes RAF1 activity. Interacts with MFHAS1. Interacts with GLS. Interacts with YWHAZ. Interacts with NEK10 and MAP2K1; the interaction is direct with NEK10 and required for ERK1/2-signaling pathway activation in response to UV irradiation. It depends on Zn(2+) as a cofactor. In terms of processing, phosphorylation at Thr-269, Ser-338, Tyr-341, Thr-491 and Ser-494 results in its activation. Phosphorylation at Ser-29, Ser-43, Ser-289, Ser-296, Ser-301 and Ser-642 by MAPK1/ERK2 results in its inactivation. Phosphorylation at Ser-259 induces the interaction with YWHAZ and inactivates kinase activity. Dephosphorylation of Ser-259 by the SHOC2-MRAS-PP1c (SMP) complex consisting of SHOC2, GTP-bound M-Ras/MRAS and the catalytic subunit of protein phosphatase 1 (PPP1CA, PPP1CB or PPP1CC); this relieves inactivation and stimulates kinase activity. Phosphorylation at Ser-338 by PAK1 and PAK5 and Ser-339 by PAK1 is required for its mitochondrial localization. Phosphorylation at Ser-621 in response to growth factor treatment stabilizes the protein, possibly by preventing proteasomal degradation. Phosphorylation at Ser-289, Ser-296, Ser-301, Ser-338 and Ser-621 are somehow linked to the methylation potential of cells. Treatment of cells with HGF in the presence of the methylation inhibitor 5'-methylthioadenosine (MTA) results in increased phosphorylation at Ser-338 and Ser-621 and decreased phosphorylation at Ser-296, Ser-301 and Ser-338. Dephosphorylation at Ser-338 by PPP5C results in a decreased of activity. Post-translationally, methylated in response to EGF treatment. This modification leads to destabilization of the protein, possibly through proteasomal degradation.

Its subcellular location is the cytoplasm. The protein localises to the cell membrane. It is found in the mitochondrion. It localises to the nucleus. The enzyme catalyses L-seryl-[protein] + ATP = O-phospho-L-seryl-[protein] + ADP + H(+). It carries out the reaction L-threonyl-[protein] + ATP = O-phospho-L-threonyl-[protein] + ADP + H(+). Its activity is regulated as follows. Regulation is a highly complex process involving membrane recruitment, protein-protein interactions, dimerization, and phosphorylation/dephosphorylation events. Ras-GTP recruits RAF1 to the membrane, thereby promoting its activation. The inactive conformation of RAF1 is maintained by autoinhibitory interactions occurring between the N-terminal regulatory and the C-terminal catalytic domains and by the binding of a 14-3-3 protein that contacts two phosphorylation sites, Ser-259 and Ser-621. Upon mitogenic stimulation, Ras and PPP2R1A cooperate to release autoinhibition and the subsequent phosphorylation of activating sites: Ser-338, Tyr-341, Thr-491, and Ser-494, yields a fully active kinase. Through a negative feedback mechanism involving MAPK1/ERK2, RAF1 is phosphorylated on Ser-29, Ser-43, Ser-289, Ser-296, Ser-301 and Ser-642 by MAPK1/ERK2, which yields an inactive, desensitized kinase. The signaling-competent conformation of RAF1 is finally re-established by the coordinated action of PIN1, a prolyl isomerase that converts pSer and pThr residues from the cis to the trans conformation, which is preferentially recognized and dephosphorylated by PPP2R1A. Activated by homodimerization and heterodimerization (with BRAF). Also regulated through association with other proteins such as KSR2, CNKSR1/CNK1, PEBP1/RKIP, PHB/prohibitin and SPRY4. PEBP1/RKIP acts by dissociating RAF1 from its substrates MAP2K1/MEK1 and MAP2K2/MEK2. PHB/prohibitin facilitates the displacement of 14-3-3 from RAF1 by activated Ras, thereby promoting cell membrane localization and phosphorylation of RAF1 at the activating Ser-338. SPRY4 inhibits Ras-independent, but not Ras-dependent, activation of RAF1. CNKSR1/CNK1 regulates Src-mediated RAF1 activation. In terms of biological role, serine/threonine-protein kinase that acts as a regulatory link between the membrane-associated Ras GTPases and the MAPK/ERK cascade, and this critical regulatory link functions as a switch determining cell fate decisions including proliferation, differentiation, apoptosis, survival and oncogenic transformation. RAF1 activation initiates a mitogen-activated protein kinase (MAPK) cascade that comprises a sequential phosphorylation of the dual-specific MAPK kinases (MAP2K1/MEK1 and MAP2K2/MEK2) and the extracellular signal-regulated kinases (MAPK3/ERK1 and MAPK1/ERK2). The phosphorylated form of RAF1 (on residues Ser-338 and Ser-339, by PAK1) phosphorylates BAD/Bcl2-antagonist of cell death at 'Ser-75'. Phosphorylates adenylyl cyclases: ADCY2, ADCY5 and ADCY6, resulting in their activation. Phosphorylates PPP1R12A resulting in inhibition of the phosphatase activity. Can promote NF-kB activation and inhibit signal transducers involved in motility (ROCK2), apoptosis (MAP3K5/ASK1 and STK3/MST2), proliferation and angiogenesis (RB1). Can protect cells from apoptosis also by translocating to the mitochondria where it binds BCL2 and displaces BAD/Bcl2-antagonist of cell death. Regulates Rho signaling and migration, and is required for normal wound healing. Plays a role in the oncogenic transformation of epithelial cells via repression of the TJ protein, occludin (OCLN) by inducing the up-regulation of a transcriptional repressor SNAI2/SLUG, which induces down-regulation of OCLN. Restricts caspase activation in response to selected stimuli, notably Fas stimulation, pathogen-mediated macrophage apoptosis, and erythroid differentiation. Phosphorylates TNNT2/cardiac muscle troponin T. This is RAF proto-oncogene serine/threonine-protein kinase (Raf1) from Rattus norvegicus (Rat).